A 259-amino-acid polypeptide reads, in one-letter code: MWAIGGVQLNSRLLLGTAQYPSPQLMSDAVKAAGVEIITVSLRRQLSPQKENYFWDLLRSLPCHLLPNTAGCSSVKEAVNTARAARELFNTHWIKLEIIGDEYTLQPNPFELVNAATILVKEGFEVFPYCTEDLILCQRLVDAGCRVLMPWAAPIGSGRGLMNTYALQLLRERFPKNILIIDAGLGRPSHAAQVMEMGFDAVLLNSAVALAMDPVVMAAGFAKAVEGGRLGYEGGMIKARNVAKATTPLIGKPFLIEKP.

Lys95 functions as the Schiff-base intermediate with DXP in the catalytic mechanism. 1-deoxy-D-xylulose 5-phosphate is bound by residues Gly156, 183 to 184, and 205 to 206; these read AG and NS.

It belongs to the ThiG family. As to quaternary structure, homotetramer. Forms heterodimers with either ThiH or ThiS.

It localises to the cytoplasm. The enzyme catalyses [ThiS sulfur-carrier protein]-C-terminal-Gly-aminoethanethioate + 2-iminoacetate + 1-deoxy-D-xylulose 5-phosphate = [ThiS sulfur-carrier protein]-C-terminal Gly-Gly + 2-[(2R,5Z)-2-carboxy-4-methylthiazol-5(2H)-ylidene]ethyl phosphate + 2 H2O + H(+). The protein operates within cofactor biosynthesis; thiamine diphosphate biosynthesis. In terms of biological role, catalyzes the rearrangement of 1-deoxy-D-xylulose 5-phosphate (DXP) to produce the thiazole phosphate moiety of thiamine. Sulfur is provided by the thiocarboxylate moiety of the carrier protein ThiS. In vitro, sulfur can be provided by H(2)S. This Coxiella burnetii (strain CbuK_Q154) (Coxiella burnetii (strain Q154)) protein is Thiazole synthase.